The chain runs to 339 residues: tRNA N6-adenosine threonylcarbamoyltransferase (339 aa).

Residues histidine 114 and histidine 118 each coordinate Fe cation. Substrate is bound by residues 137-141, aspartate 170, glycine 183, aspartate 187, and asparagine 277; that span reads VVSGG. Residue aspartate 305 participates in Fe cation binding.

The protein belongs to the KAE1 / TsaD family. The cofactor is Fe(2+).

It localises to the cytoplasm. The enzyme catalyses L-threonylcarbamoyladenylate + adenosine(37) in tRNA = N(6)-L-threonylcarbamoyladenosine(37) in tRNA + AMP + H(+). In terms of biological role, required for the formation of a threonylcarbamoyl group on adenosine at position 37 (t(6)A37) in tRNAs that read codons beginning with adenine. Is involved in the transfer of the threonylcarbamoyl moiety of threonylcarbamoyl-AMP (TC-AMP) to the N6 group of A37, together with TsaE and TsaB. TsaD likely plays a direct catalytic role in this reaction. This Clostridium perfringens (strain ATCC 13124 / DSM 756 / JCM 1290 / NCIMB 6125 / NCTC 8237 / Type A) protein is tRNA N6-adenosine threonylcarbamoyltransferase.